Here is a 315-residue protein sequence, read N- to C-terminus: Protein-export membrane protein SecF (315 aa).

A run of 6 helical transmembrane segments spans residues 35 to 55 (MVLYPLVVFLVAALILAVHFP), 152 to 172 (QGIKAVIYAFIGMAIVVFLFF), 181 to 201 (IIFSAFSDMVIALATMGILGI), 205 to 225 (TATIAALLMLIGYTVDSNILL), 242 to 264 (LSAVSTGFTMSTTTLGALFILWL), and 282 to 302 (LLADFMNTWIFNAGVLRWYIA).

This sequence belongs to the SecD/SecF family. SecF subfamily. In terms of assembly, part of the protein translocation apparatus. Forms a complex with SecD.

It localises to the cell membrane. Its function is as follows. Involved in protein export. This is Protein-export membrane protein SecF from Thermococcus gammatolerans (strain DSM 15229 / JCM 11827 / EJ3).